The sequence spans 447 residues: Argininosuccinate synthase (447 aa).

Residues Ala-17 to Ser-25 and Ala-43 each bind ATP. L-citrulline is bound at residue Tyr-99. ATP contacts are provided by Gly-129 and Thr-131. Positions 131, 135, and 136 each coordinate L-aspartate. Asn-135 contributes to the L-citrulline binding site. Asp-136 provides a ligand contact to ATP. Residues Arg-139 and Ser-192 each contribute to the L-citrulline site. Position 194 (Asp-194) interacts with ATP. 3 residues coordinate L-citrulline: Thr-201, Glu-203, and Glu-280.

It belongs to the argininosuccinate synthase family. Type 2 subfamily. Homotetramer.

The protein localises to the cytoplasm. It catalyses the reaction L-citrulline + L-aspartate + ATP = 2-(N(omega)-L-arginino)succinate + AMP + diphosphate + H(+). It functions in the pathway amino-acid biosynthesis; L-arginine biosynthesis; L-arginine from L-ornithine and carbamoyl phosphate: step 2/3. The chain is Argininosuccinate synthase (argG) from Salmonella typhi.